Reading from the N-terminus, the 304-residue chain is Oxygen-dependent coproporphyrinogen-III oxidase (304 aa).

Ser-94 is a binding site for substrate. Residues His-98 and His-108 each coordinate a divalent metal cation. Residue His-108 is the Proton donor of the active site. 110 to 112 serves as a coordination point for substrate; sequence NVR. A divalent metal cation-binding residues include His-147 and His-177. An important for dimerization region spans residues 242 to 277; it reads YVEFNLVYDRGTLFGLQTGGRTESILMSMPPLVRWE. Residue 260–262 participates in substrate binding; sequence GGR.

The protein belongs to the aerobic coproporphyrinogen-III oxidase family. As to quaternary structure, homodimer. It depends on a divalent metal cation as a cofactor.

The protein resides in the cytoplasm. The enzyme catalyses coproporphyrinogen III + O2 + 2 H(+) = protoporphyrinogen IX + 2 CO2 + 2 H2O. It functions in the pathway porphyrin-containing compound metabolism; protoporphyrin-IX biosynthesis; protoporphyrinogen-IX from coproporphyrinogen-III (O2 route): step 1/1. Its function is as follows. Involved in the heme biosynthesis. Catalyzes the aerobic oxidative decarboxylation of propionate groups of rings A and B of coproporphyrinogen-III to yield the vinyl groups in protoporphyrinogen-IX. This is Oxygen-dependent coproporphyrinogen-III oxidase from Shewanella pealeana (strain ATCC 700345 / ANG-SQ1).